Here is a 206-residue protein sequence, read N- to C-terminus: Guanylate kinase (206 aa).

Positions 3 to 183 (GNLYILSAPS…ALTELKSILT (181 aa)) constitute a Guanylate kinase-like domain. 10–17 (APSGAGKS) contributes to the ATP binding site.

It belongs to the guanylate kinase family.

It is found in the cytoplasm. It catalyses the reaction GMP + ATP = GDP + ADP. Functionally, essential for recycling GMP and indirectly, cGMP. The sequence is that of Guanylate kinase from Haemophilus ducreyi (strain 35000HP / ATCC 700724).